Here is a 129-residue protein sequence, read N- to C-terminus: Protein FYV12 (129 aa).

N-linked (GlcNAc...) asparagine glycosylation is present at Asn-91. The chain crosses the membrane as a helical span at residues 109 to 128 (LMTTFLLYVLYVCIYISAFI).

It is found in the membrane. Functionally, involved in K1 killer toxin resistance. The polypeptide is Protein FYV12 (FYV12) (Saccharomyces cerevisiae (strain ATCC 204508 / S288c) (Baker's yeast)).